We begin with the raw amino-acid sequence, 100 residues long: High mobility group protein C (100 aa).

A DNA-binding region (HMG box) is located at residues 12-80; the sequence is PKRPLSAFFL…KYEKDMQAYE (69 aa). Positions 81-100 are disordered; that stretch reads KKYGKPEKQKKIKKNKKGSK. A compositionally biased stretch (basic residues) spans 90–100; that stretch reads KKIKKNKKGSK.

The protein localises to the nucleus. It is found in the chromosome. In Tetrahymena thermophila, this protein is High mobility group protein C.